Reading from the N-terminus, the 164-residue chain is Cytochrome c-type biogenesis protein CcmE (164 aa).

Topologically, residues 1-8 (MNPRRKKR) are cytoplasmic. Residues 9–29 (LTLAVALIGGVAAIASLLLYA) form a helical; Signal-anchor for type II membrane protein membrane-spanning segment. The Periplasmic portion of the chain corresponds to 30–164 (LNSNLNLFFT…EDQSKAGGYK (135 aa)). Positions 131 and 135 each coordinate heme. The tract at residues 140–164 (VAEAMGQSHEKLDYSEDQSKAGGYK) is disordered. A compositionally biased stretch (basic and acidic residues) spans 147–158 (SHEKLDYSEDQS).

It belongs to the CcmE/CycJ family.

The protein resides in the cell inner membrane. Its function is as follows. Heme chaperone required for the biogenesis of c-type cytochromes. Transiently binds heme delivered by CcmC and transfers the heme to apo-cytochromes in a process facilitated by CcmF and CcmH. This chain is Cytochrome c-type biogenesis protein CcmE, found in Shewanella piezotolerans (strain WP3 / JCM 13877).